We begin with the raw amino-acid sequence, 67 residues long: Small ribosomal subunit protein bS21 (67 aa).

This sequence belongs to the bacterial ribosomal protein bS21 family.

The sequence is that of Small ribosomal subunit protein bS21 from Nitratidesulfovibrio vulgaris (strain DSM 19637 / Miyazaki F) (Desulfovibrio vulgaris).